The following is a 710-amino-acid chain: Probable GTP diphosphokinase RSH2, chloroplastic (710 aa).

The transit peptide at 1 to 63 directs the protein to the chloroplast; it reads MVVATTIALY…SSLFSSASVK (63 aa). The HD domain maps to 233–337; that stretch reads YLQHCVETAM…IKLADRLHNM (105 aa).

Belongs to the RelA/SpoT family.

It localises to the plastid. Its subcellular location is the chloroplast. The enzyme catalyses GTP + ATP = guanosine 3'-diphosphate 5'-triphosphate + AMP. Its function is as follows. Probable ppGpp (guanosine 3'-diphosphate 5'-diphosphate) synthetase that may be involved in a rapid plant ppGpp-mediated response to pathogens and other stresses. This chain is Probable GTP diphosphokinase RSH2, chloroplastic (RSH2), found in Arabidopsis thaliana (Mouse-ear cress).